The following is a 65-amino-acid chain: Light-harvesting protein B800/830/1020 beta-2 chain (65 aa).

Over 1-17 (TDIRTGLTDEECQEIHE) the chain is Cytoplasmic. 2 residues coordinate a bacteriochlorophyll: histidine 16 and asparagine 34. A helical membrane pass occupies residues 18–40 (MNMLGMHAYWSIGLIANALAYAW). The Periplasmic portion of the chain corresponds to 41-65 (RPFHQGRAGNRLEDHAPDYVRSALT).

This sequence belongs to the antenna complex beta subunit family. The core complex is formed by different alpha and beta chains, binding bacteriochlorophyll molecules, and arranged most probably in tetrameric structures disposed around the reaction center. The non-pigmented gamma chains may constitute additional components.

The protein localises to the cell inner membrane. Functionally, antenna complexes are light-harvesting systems, which transfer the excitation energy to the reaction centers. The protein is Light-harvesting protein B800/830/1020 beta-2 chain of Halorhodospira halochloris (Ectothiorhodospira halochloris).